The chain runs to 718 residues: MTITSPVIKTPPLNSEIRLESNLTVESGDIEINEKDIVNASEVIVILDAGSQYSKVIDRRVRELNVASEIHPLNIDLLELIKIKSKSGSTIKGIIISGGPESVYGENAPKFDKSLFSEKLNLPIFGICYGMQLMNYIFGGKVESNSQREDGVHNIEILKDENQQLVSKLFKNLNQTEQVLLTHGDSVTKIADGFKIICKSDDGIVSGIENERLGYYGVQFHPEVDLTTNGKKMFSNFLIDICGCSANYTLDDREQQAITYIKSIVSNKKVLVLVSGGVDSTVCAALISKAIGPENVIALHIDNGFMRKDESLNVEKALSVLGLHLIVVDASQTFYNSTTTIKGHLTSSLKETISPEERRKIIGDTFMRVAENEVKKLGLQPEDVYLAQGTLRPDLIESSSKTVSGVADVIKTHHNDTELVRILRDSGRVVEPLKDYHKDEVRELGKSLGLSDSLVWRQPFPGPGLAIRIICADEPYLVNYDFTNNVVQYLVTGEASSELESEVKIKIDKQLTEMKCKRQDKITIKPVLLPIQTVGVQGDGRTYSYLLGLYSSENSTIDQIPWSYIFNLARTIPKICHNINRVVFIFSQNATKHTNIKVSNEPVKHITPTRLTPDVIKQLQHADSIVSEQLYKYNLIKSLSQVPVVSLPIDFGVTGNRSIAIRTFITNDFMTGVPAIPGKNISFDCLQEITNNILTSVNGISKVLFDCTSKPPGTTEFL.

The 205-residue stretch at 43–247 folds into the Glutamine amidotransferase type-1 domain; the sequence is VIVILDAGSQ…LIDICGCSAN (205 aa). Residues Cys-128, His-221, and Glu-223 each act as for GATase activity in the active site. A GMPS ATP-PPase domain is found at 248-457; the sequence is YTLDDREQQA…LGLSDSLVWR (210 aa). Residue 275–281 coordinates ATP; it reads SGGVDST.

As to quaternary structure, homodimer.

It carries out the reaction XMP + L-glutamine + ATP + H2O = GMP + L-glutamate + AMP + diphosphate + 2 H(+). It functions in the pathway purine metabolism; GMP biosynthesis; GMP from XMP (L-Gln route): step 1/1. The chain is GMP synthase [glutamine-hydrolyzing] (guaA) from Dictyostelium discoideum (Social amoeba).